Here is a 62-residue protein sequence, read N- to C-terminus: Large ribosomal subunit protein uL30 (62 aa).

It belongs to the universal ribosomal protein uL30 family. In terms of assembly, part of the 50S ribosomal subunit.

The polypeptide is Large ribosomal subunit protein uL30 (Prosthecochloris aestuarii (strain DSM 271 / SK 413)).